Consider the following 701-residue polypeptide: Ribosomal RNA large subunit methyltransferase K/L (701 aa).

A THUMP domain is found at 43 to 154; sequence LLYQSLMWSR…KETAHISLDL (112 aa).

It belongs to the methyltransferase superfamily. RlmKL family.

The protein localises to the cytoplasm. It catalyses the reaction guanosine(2445) in 23S rRNA + S-adenosyl-L-methionine = N(2)-methylguanosine(2445) in 23S rRNA + S-adenosyl-L-homocysteine + H(+). It carries out the reaction guanosine(2069) in 23S rRNA + S-adenosyl-L-methionine = N(2)-methylguanosine(2069) in 23S rRNA + S-adenosyl-L-homocysteine + H(+). Functionally, specifically methylates the guanine in position 2445 (m2G2445) and the guanine in position 2069 (m7G2069) of 23S rRNA. This Klebsiella pneumoniae (strain 342) protein is Ribosomal RNA large subunit methyltransferase K/L.